A 47-amino-acid polypeptide reads, in one-letter code: UPF0391 membrane protein rrnAC2507 (47 aa).

2 consecutive transmembrane segments (helical) span residues 5–25 (VVLVILAVVAGIAGFRGIAGL) and 27–47 (FRVAKFLIVIFLVLALVTFLL).

It belongs to the UPF0391 family.

Its subcellular location is the cell membrane. The chain is UPF0391 membrane protein rrnAC2507 from Haloarcula marismortui (strain ATCC 43049 / DSM 3752 / JCM 8966 / VKM B-1809) (Halobacterium marismortui).